Here is a 244-residue protein sequence, read N- to C-terminus: rRNA adenine N-6-methyltransferase (244 aa).

S-adenosyl-L-methionine-binding residues include Asn11, Ile13, Gly38, Glu59, Asp84, and Asn101.

The protein belongs to the class I-like SAM-binding methyltransferase superfamily. rRNA adenine N(6)-methyltransferase family.

The catalysed reaction is adenosine(2085) in 23S rRNA + 2 S-adenosyl-L-methionine = N(6)-dimethyladenosine(2085) in 23S rRNA + 2 S-adenosyl-L-homocysteine + 2 H(+). Its function is as follows. This protein produces a dimethylation of the adenine residue at position 2085 in 23S rRNA, resulting in reduced affinity between ribosomes and macrolide-lincosamide-streptogramin B antibiotics. The polypeptide is rRNA adenine N-6-methyltransferase (ermC) (Staphylococcus aureus).